A 386-amino-acid polypeptide reads, in one-letter code: O-methyltransferase 10 (386 aa).

S-adenosyl-L-homocysteine contacts are provided by serine 207, glycine 231, aspartate 254, aspartate 274, and lysine 288. Aspartate 254 contributes to the S-adenosyl-L-methionine binding site. Histidine 292 (proton acceptor) is an active-site residue.

It belongs to the class I-like SAM-binding methyltransferase superfamily. Cation-independent O-methyltransferase family. In terms of assembly, homodimer.

The catalysed reaction is dopamine + S-adenosyl-L-methionine = 4-methoxytyramine + S-adenosyl-L-homocysteine + H(+). It catalyses the reaction 3,4-dihydroxy-5-methoxyphenethylamine + S-adenosyl-L-methionine = 3-hydroxy-4,5-dimethoxyphenethylamine + S-adenosyl-L-homocysteine + H(+). It carries out the reaction 3-hydroxy-4,5-dimethoxyphenethylamine + S-adenosyl-L-methionine = mescaline + S-adenosyl-L-homocysteine + H(+). The enzyme catalyses 4-hydroxy-3,5-dimethoxyphenethylamine + S-adenosyl-L-methionine = mescaline + S-adenosyl-L-homocysteine + H(+). The protein operates within aromatic compound metabolism. Its pathway is alkaloid biosynthesis. Its function is as follows. O-methyltransferase participating in the biosynthesis of natural products derived from phenylethylamine, including mescaline, a natural hallucinogen potentially used in psychotherapeutic treatments. Catalyzes the O-methylation of mescaline para hydroxyl groups, using dopamine, 3,4-dihydroxy-5-methoxyphenethylamine, 3-hydroxy-4,5-dimethoxyphenethylamine and 4-hydroxy-3,5-dimethoxyphenethylamine as substrates. The sequence is that of O-methyltransferase 10 from Lophophora williamsii (Peyote).